We begin with the raw amino-acid sequence, 133 residues long: Holo-[acyl-carrier-protein] synthase (133 aa).

2 residues coordinate Mg(2+): Asp-8 and Glu-57.

It belongs to the P-Pant transferase superfamily. AcpS family. The cofactor is Mg(2+).

It localises to the cytoplasm. The catalysed reaction is apo-[ACP] + CoA = holo-[ACP] + adenosine 3',5'-bisphosphate + H(+). Transfers the 4'-phosphopantetheine moiety from coenzyme A to a Ser of acyl-carrier-protein. This chain is Holo-[acyl-carrier-protein] synthase, found in Bartonella quintana (strain Toulouse) (Rochalimaea quintana).